The chain runs to 215 residues: Cytochrome b6 (215 aa).

A helical transmembrane segment spans residues 32-52 (IFYCLGGITLTCFLVQVATGF). Cys-35 contributes to the heme c binding site. Positions 86 and 100 each coordinate heme b. 3 consecutive transmembrane segments (helical) span residues 90–110 (ASMM…TGGF), 116–136 (LTWV…VTGY), and 186–206 (LHTF…FPMI). Residues His-187 and His-202 each coordinate heme b.

This sequence belongs to the cytochrome b family. PetB subfamily. As to quaternary structure, the 4 large subunits of the cytochrome b6-f complex are cytochrome b6, subunit IV (17 kDa polypeptide, PetD), cytochrome f and the Rieske protein, while the 4 small subunits are PetG, PetL, PetM and PetN. The complex functions as a dimer. Heme b is required as a cofactor. Heme c serves as cofactor.

The protein resides in the plastid. It is found in the chloroplast thylakoid membrane. In terms of biological role, component of the cytochrome b6-f complex, which mediates electron transfer between photosystem II (PSII) and photosystem I (PSI), cyclic electron flow around PSI, and state transitions. This is Cytochrome b6 from Solanum bulbocastanum (Wild potato).